The chain runs to 66 residues: Large ribosomal subunit protein bL32 (66 aa).

This sequence belongs to the bacterial ribosomal protein bL32 family.

The polypeptide is Large ribosomal subunit protein bL32 (Acetivibrio thermocellus (strain ATCC 27405 / DSM 1237 / JCM 9322 / NBRC 103400 / NCIMB 10682 / NRRL B-4536 / VPI 7372) (Clostridium thermocellum)).